We begin with the raw amino-acid sequence, 112 residues long: Na(+)/H(+) antiporter subunit C (112 aa).

3 consecutive transmembrane segments (helical) span residues 4-21 (LMSITAGVLFMVGTYLIL), 28-50 (VVVGLILLSHGAHLLLLTMAGLQ), and 70-92 (QALILTAIVISFGVTSFLLVLAY).

Belongs to the CPA3 antiporters (TC 2.A.63) subunit C family. In terms of assembly, forms a heterooligomeric complex that consists of seven subunits: MrpA, MrpB, MrpC, MrpD, MrpE, MrpF and MrpG.

Its subcellular location is the cell membrane. Its function is as follows. Mnh complex is a Na(+)Li(+)/H(+) antiporter involved in Na(+) and/or Li(+) excretion and Na(+) resistance. Na(+)/H(+) antiport consumes a transmembrane electrical potential, and is thus inferred to be electrogenic. Does not transport K(+), Ca(2+) or Mg(2+). The sequence is that of Na(+)/H(+) antiporter subunit C (mrpC) from Alkalihalophilus pseudofirmus (strain ATCC BAA-2126 / JCM 17055 / OF4) (Bacillus pseudofirmus).